A 198-amino-acid chain; its full sequence is MEHYISLFVRAVFVENMALAFFLGMCTFLAVSKKVSTAFGLGIAVTVVLGISVPANNLVYNLVLRDGALVEGVDLSFLNFITFIGVIAAIVQVLEMILDRYFPALYNALGIFLPLITVNCAIFGGVSFMAQRDYNFPESIVYGFGSGIGWMLAIVALAGIREKMKYANVPAGLQGLGITFITTGLMALGFMSFSGVNL.

6 consecutive transmembrane segments (helical) span residues 11–31 (AVFVENMALAFFLGMCTFLAV), 35–55 (VSTAFGLGIAVTVVLGISVPA), 77–97 (FLNFITFIGVIAAIVQVLEMI), 109–129 (LGIFLPLITVNCAIFGGVSFM), 140–160 (IVYGFGSGIGWMLAIVALAGI), and 176–196 (LGITFITTGLMALGFMSFSGV).

This sequence belongs to the NqrDE/RnfAE family. In terms of assembly, composed of six subunits; NqrA, NqrB, NqrC, NqrD, NqrE and NqrF.

It is found in the cell inner membrane. It catalyses the reaction a ubiquinone + n Na(+)(in) + NADH + H(+) = a ubiquinol + n Na(+)(out) + NAD(+). Its function is as follows. NQR complex catalyzes the reduction of ubiquinone-1 to ubiquinol by two successive reactions, coupled with the transport of Na(+) ions from the cytoplasm to the periplasm. NqrA to NqrE are probably involved in the second step, the conversion of ubisemiquinone to ubiquinol. The sequence is that of Na(+)-translocating NADH-quinone reductase subunit E from Yersinia enterocolitica serotype O:8 / biotype 1B (strain NCTC 13174 / 8081).